A 350-amino-acid chain; its full sequence is Transmembrane protein 115 (350 aa).

The Cytoplasmic portion of the chain corresponds to 1 to 19 (MQRALPGARQHLGAILASA). Positions 1–205 (MQRALPGARQ…FGLLSSWVYL (205 aa)) are mediates homooligomerization. Residues 20-40 (SVVVKALCAVVLFLYLLSFAV) traverse the membrane as a helical segment. Residues 41 to 97 (DTGCLAVTPGYLFPPNFWIWTLATHGLMEQHVWDVAISLATVVVAGRLLEPLWGALE) are Lumenal-facing. The helical transmembrane segment at 98–118 (LLIFFSVVNVSVGLLGALAYL) threads the bilayer. Over 119–126 (LTYMASFN) the chain is Cytoplasmic. A helical transmembrane segment spans residues 127–147 (LVYLFTIRIHGALGFLGGVLV). Over 148–165 (ALKQTMGDCVVLRVPQVR) the chain is Lumenal. Residues 166 to 186 (VSVVPMLLLALLLLLRLATLL) traverse the membrane as a helical segment. Over 187–350 (QSPALASYGF…LITLETAPLL (164 aa)) the chain is Cytoplasmic. Positions 206–229 (RFYQRHSRGRGDMADHFAFATFFP) are mediates localization to the Golgi. The segment at 299–350 (EDQSAWPSMDDDEEEAGAKTDSPLPLEEASTPPGKVTVPESSLITLETAPLL) is disordered. Threonine 329 bears the Phosphothreonine mark.

It belongs to the TMEM115 family. In terms of assembly, homooligomer. Interacts with COPB1. May interact with LMAN1. Interacts with the COG complex; probably through COG3.

Its subcellular location is the golgi apparatus. It is found in the golgi stack membrane. Its function is as follows. May play a role in retrograde transport of proteins from the Golgi to the endoplasmic reticulum. May indirectly play a role in protein glycosylation in the Golgi. This is Transmembrane protein 115 from Mus musculus (Mouse).